Reading from the N-terminus, the 475-residue chain is Ribulose bisphosphate carboxylase large chain (475 aa).

Positions 1 to 2 (MS) are excised as a propeptide. Residue Pro3 is modified to N-acetylproline. Residues Thr65, Asn123, and Thr173 each contribute to the substrate site. The active-site Proton acceptor is Lys175. Lys177 serves as a coordination point for substrate. Mg(2+)-binding residues include Lys201, Asp203, and Glu204. Lys201 bears the N6-carboxylysine mark. Substrate is bound by residues Glu204, His294, Arg295, His327, Lys334, Ser379, Gly381, Gly403, and Gly404. His294 serves as the catalytic Proton acceptor.

This sequence belongs to the RuBisCO large chain family. Type I subfamily. As to quaternary structure, heterohexadecamer of 8 large chains and 8 small chains. The cofactor is Mg(2+). Post-translationally, the disulfide bond which can form between Cys-247 in the large chain dimeric partners within the hexadecamer appears to be associated with oxidative stress and protein turnover. The disulfide bonds reported in 1RBO may be the result of oxidation during crystallization.

Its subcellular location is the plastid. It localises to the chloroplast. The catalysed reaction is 2 (2R)-3-phosphoglycerate + 2 H(+) = D-ribulose 1,5-bisphosphate + CO2 + H2O. It catalyses the reaction D-ribulose 1,5-bisphosphate + O2 = 2-phosphoglycolate + (2R)-3-phosphoglycerate + 2 H(+). Abscisic acid (ABA) causes weak inhibition of RuBisCO catalytic activity, but more potent inhibition of RuBisCO activation. In terms of biological role, ruBisCO catalyzes two reactions: the carboxylation of D-ribulose 1,5-bisphosphate, the primary event in carbon dioxide fixation, as well as the oxidative fragmentation of the pentose substrate in the photorespiration process. Both reactions occur simultaneously and in competition at the same active site. Binds to abscisic acid (ABA) which has weakly inhibits carboxylation and more strongly inhibits enzyme activation. The sequence is that of Ribulose bisphosphate carboxylase large chain from Spinacia oleracea (Spinach).